Consider the following 167-residue polypeptide: Protein alc (167 aa).

Functionally, participates in the host transcription shutoff by causing premature termination of transcription from host DNA. Acts as a site-specific termination factor that abolishes transcript elongation on cytosine-containing DNA but not on the 5-hydroxymethyl cytosine present in the viral DNA. Therefore inhibits as well transcription from other phages that contain cytosine in their DNA. This chain is Protein alc (alc), found in Enterobacteria phage T4 (Bacteriophage T4).